The primary structure comprises 437 residues: Asparagine--tRNA ligase (437 aa).

This sequence belongs to the class-II aminoacyl-tRNA synthetase family. As to quaternary structure, homodimer.

It localises to the cytoplasm. The enzyme catalyses tRNA(Asn) + L-asparagine + ATP = L-asparaginyl-tRNA(Asn) + AMP + diphosphate + H(+). The chain is Asparagine--tRNA ligase from Symbiobacterium thermophilum (strain DSM 24528 / JCM 14929 / IAM 14863 / T).